Consider the following 152-residue polypeptide: Pertussis toxin subunit 4 (152 aa).

Positions 1 to 42 (MLRRFPTRTTAPGQGGARRSRVRALAWLLASGAMTHLSPALA) are cleaved as a signal peptide. 2 cysteine pairs are disulfide-bonded: Cys73–Cys93 and Cys145–Cys151.

Pertussis toxin contains five different chains, S1-S5. They are organized into 2 functional subunits: A, composed of S1 (which is toxic) and B, containing S2, S3, S5, and two copies of S4 (B binds to the membrane receptors). Dimers of S2-S4 and S3-S4 are held together by S5.

The protein localises to the secreted. It is found in the host cell membrane. Its function is as follows. PTX oligomer B binds to receptors on the eukaryotic cell surface and facilitates the translocation of the toxic subunit across the cell membrane. In Bordetella parapertussis (strain 12822 / ATCC BAA-587 / NCTC 13253), this protein is Pertussis toxin subunit 4 (ptxD).